The primary structure comprises 379 residues: Queuine tRNA-ribosyltransferase (379 aa).

Asp94 serves as the catalytic Proton acceptor. Substrate-binding positions include 94-98, Asp148, Gln191, and Gly218; that span reads DSGGF. Residues 249-255 form an RNA binding region; it reads GVGSPDS. Asp268 serves as the catalytic Nucleophile. Positions 273-277 are RNA binding; important for wobble base 34 recognition; it reads TRIAR. Residues Cys306, Cys308, Cys311, and His337 each contribute to the Zn(2+) site.

The protein belongs to the queuine tRNA-ribosyltransferase family. Homodimer. Within each dimer, one monomer is responsible for RNA recognition and catalysis, while the other monomer binds to the replacement base PreQ1. The cofactor is Zn(2+).

It carries out the reaction 7-aminomethyl-7-carbaguanine + guanosine(34) in tRNA = 7-aminomethyl-7-carbaguanosine(34) in tRNA + guanine. The protein operates within tRNA modification; tRNA-queuosine biosynthesis. Its function is as follows. Catalyzes the base-exchange of a guanine (G) residue with the queuine precursor 7-aminomethyl-7-deazaguanine (PreQ1) at position 34 (anticodon wobble position) in tRNAs with GU(N) anticodons (tRNA-Asp, -Asn, -His and -Tyr). Catalysis occurs through a double-displacement mechanism. The nucleophile active site attacks the C1' of nucleotide 34 to detach the guanine base from the RNA, forming a covalent enzyme-RNA intermediate. The proton acceptor active site deprotonates the incoming PreQ1, allowing a nucleophilic attack on the C1' of the ribose to form the product. After dissociation, two additional enzymatic reactions on the tRNA convert PreQ1 to queuine (Q), resulting in the hypermodified nucleoside queuosine (7-(((4,5-cis-dihydroxy-2-cyclopenten-1-yl)amino)methyl)-7-deazaguanosine). The protein is Queuine tRNA-ribosyltransferase of Listeria monocytogenes serovar 1/2a (strain ATCC BAA-679 / EGD-e).